Consider the following 129-residue polypeptide: Small ribosomal subunit protein uS11 (129 aa).

The protein belongs to the universal ribosomal protein uS11 family. In terms of assembly, part of the 30S ribosomal subunit. Interacts with proteins S7 and S18. Binds to IF-3.

In terms of biological role, located on the platform of the 30S subunit, it bridges several disparate RNA helices of the 16S rRNA. Forms part of the Shine-Dalgarno cleft in the 70S ribosome. The sequence is that of Small ribosomal subunit protein uS11 from Aeromonas hydrophila subsp. hydrophila (strain ATCC 7966 / DSM 30187 / BCRC 13018 / CCUG 14551 / JCM 1027 / KCTC 2358 / NCIMB 9240 / NCTC 8049).